Here is a 647-residue protein sequence, read N- to C-terminus: MKKEEYLEKVALANLWMRAYYEKDEPLASDEEYDALIRELRVFEEQNKDEVSKDSPTQKIAPTIQSEFKKIAHLKRMWSMEDVFDESELRAWAKRAKCEKNFFIEPKFDGASLNLLYENGKLVSGATRGDGEVGEDITLNVFEIENIPKNIAYKKRIEIRGEVVILKDDFEKINEKRALLNQSLFANPRNAASGSLRQLDTSITKERNLKFYPWGVGENTLNFTKHSEVMQFVRDLGFLKDDFIKLCANLDEVLKAYDELLTLREKKPMMMDGMVVRVDDLALCEELGYTVKFPKFMAAFKFPALEKTTRLIGINLQVGRSGVITPVAVLEPVNLDGVVVKSATLHNFDEIARLDVKINDFVSVIRSGDVIPKITKVFKERREGLEMEISHPKLCPTCQSELLDEGTLIKCQNIDCEDRLVNSIIHFVSKKCLNIDGLGENIVELLYKHKKITTLESIFHLKFSDFEGLEGFKEKKINNLLNAIEQARECELFRFITALGIEHIGEVAAKKLSLSFGKEWHKQSFEAYVNLEGFGEQMALSLCEFTRVNHTRIDEFYKLLNLKIEKLEVKSDSVIFGKTFVITGTLSRPRDEFKALIENLGGKVSGSVSKKTDYVLFGEEAGSKLSKAKELEVKCIDESAFNELVKE.

Residues 30 to 34, 79 to 80, and Glu-105 each bind NAD(+); these read DEEYD and SM. Lys-107 serves as the catalytic N6-AMP-lysine intermediate. Residues Arg-128, Glu-162, and Lys-301 each contribute to the NAD(+) site. The Zn(2+) site is built by Cys-395, Cys-398, Cys-411, and Cys-416. In terms of domain architecture, BRCT spans 570–647; it reads KSDSVIFGKT…ESAFNELVKE (78 aa).

The protein belongs to the NAD-dependent DNA ligase family. LigA subfamily. Requires Mg(2+) as cofactor. Mn(2+) serves as cofactor.

The enzyme catalyses NAD(+) + (deoxyribonucleotide)n-3'-hydroxyl + 5'-phospho-(deoxyribonucleotide)m = (deoxyribonucleotide)n+m + AMP + beta-nicotinamide D-nucleotide.. DNA ligase that catalyzes the formation of phosphodiester linkages between 5'-phosphoryl and 3'-hydroxyl groups in double-stranded DNA using NAD as a coenzyme and as the energy source for the reaction. It is essential for DNA replication and repair of damaged DNA. The polypeptide is DNA ligase (Campylobacter jejuni subsp. doylei (strain ATCC BAA-1458 / RM4099 / 269.97)).